A 230-amino-acid polypeptide reads, in one-letter code: MDAALVSELRARYGIEFNNLALLDEAFTHSSYVNEHRELGLRDNERLEFLGDAVMEITVSEYLYKKYPDWPEGKLTRLRAAIVCTKSFSSFSKEAHFDRYIRLGKGEEKNGARARATLLEDLFEAFNGALFLDQGRDAVVDFVSQVIFPKIEAGEFSDQTDYKTNLQEFLQQDGEIEIDYQLLAEVGPSHDRQFEVDVLVGDRVLGSGVGRNKKAAEQAAAKKALEQLKA.

The RNase III domain maps to 6 to 135 (VSELRARYGI…FNGALFLDQG (130 aa)). Glu48 contacts Mg(2+). Residue Asp52 is part of the active site. The Mg(2+) site is built by Asp121 and Glu124. The active site involves Glu124. Residues 161-230 (DYKTNLQEFL…AKKALEQLKA (70 aa)) form the DRBM domain.

It belongs to the ribonuclease III family. As to quaternary structure, homodimer. Mg(2+) is required as a cofactor.

It is found in the cytoplasm. The catalysed reaction is Endonucleolytic cleavage to 5'-phosphomonoester.. Digests double-stranded RNA. Involved in the processing of primary rRNA transcript to yield the immediate precursors to the large and small rRNAs (23S and 16S). Processes some mRNAs, and tRNAs when they are encoded in the rRNA operon. Processes pre-crRNA and tracrRNA of type II CRISPR loci if present in the organism. This chain is Ribonuclease 3, found in Latilactobacillus sakei subsp. sakei (strain 23K) (Lactobacillus sakei subsp. sakei).